A 480-amino-acid chain; its full sequence is Chromosomal replication initiator protein DnaA (480 aa).

The domain I, interacts with DnaA modulators stretch occupies residues 1–71 (MNLTKVWNTT…REQLGSVVGF (71 aa)). The interval 71 to 139 (FPVDVRIVLA…LELHRAVRSS (69 aa)) is domain II. The tract at residues 91 to 115 (SINGRHAARDTRKSDHHAPLSGGYG) is disordered. Residues 97 to 108 (AARDTRKSDHHA) show a composition bias toward basic and acidic residues. The segment at 140-356 (MLNPRYTFDR…GCLNRVTAYA (217 aa)) is domain III, AAA+ region. Positions 184, 186, 187, and 188 each coordinate ATP. The domain IV, binds dsDNA stretch occupies residues 357-480 (QMYNIPVTIE…IRERLMNSAV (124 aa)).

The protein belongs to the DnaA family. As to quaternary structure, oligomerizes as a right-handed, spiral filament on DNA at oriC.

It is found in the cytoplasm. Plays an essential role in the initiation and regulation of chromosomal replication. ATP-DnaA binds to the origin of replication (oriC) to initiate formation of the DNA replication initiation complex once per cell cycle. Binds the DnaA box (a 9 base pair repeat at the origin) and separates the double-stranded (ds)DNA. Forms a right-handed helical filament on oriC DNA; dsDNA binds to the exterior of the filament while single-stranded (ss)DNA is stabiized in the filament's interior. The ATP-DnaA-oriC complex binds and stabilizes one strand of the AT-rich DNA unwinding element (DUE), permitting loading of DNA polymerase. After initiation quickly degrades to an ADP-DnaA complex that is not apt for DNA replication. Binds acidic phospholipids. In Roseiflexus castenholzii (strain DSM 13941 / HLO8), this protein is Chromosomal replication initiator protein DnaA.